Reading from the N-terminus, the 432-residue chain is Trigger factor (432 aa).

The region spanning Glu161–Pro246 is the PPIase FKBP-type domain.

The protein belongs to the FKBP-type PPIase family. Tig subfamily.

Its subcellular location is the cytoplasm. It catalyses the reaction [protein]-peptidylproline (omega=180) = [protein]-peptidylproline (omega=0). Functionally, involved in protein export. Acts as a chaperone by maintaining the newly synthesized protein in an open conformation. Functions as a peptidyl-prolyl cis-trans isomerase. This Salmonella arizonae (strain ATCC BAA-731 / CDC346-86 / RSK2980) protein is Trigger factor.